Consider the following 362-residue polypeptide: 3-dehydroquinate synthase (362 aa).

NAD(+) is bound by residues 70–75 (DGEKYK), 104–108 (GVIGD), 128–129 (TT), Lys-141, and Lys-150. Positions 183, 246, and 263 each coordinate Zn(2+).

It belongs to the sugar phosphate cyclases superfamily. Dehydroquinate synthase family. Requires Co(2+) as cofactor. Zn(2+) is required as a cofactor. NAD(+) serves as cofactor.

The protein resides in the cytoplasm. It catalyses the reaction 7-phospho-2-dehydro-3-deoxy-D-arabino-heptonate = 3-dehydroquinate + phosphate. Its pathway is metabolic intermediate biosynthesis; chorismate biosynthesis; chorismate from D-erythrose 4-phosphate and phosphoenolpyruvate: step 2/7. Catalyzes the conversion of 3-deoxy-D-arabino-heptulosonate 7-phosphate (DAHP) to dehydroquinate (DHQ). In Acinetobacter baylyi (strain ATCC 33305 / BD413 / ADP1), this protein is 3-dehydroquinate synthase.